The chain runs to 417 residues: NADH-quinone oxidoreductase subunit D (417 aa).

The protein belongs to the complex I 49 kDa subunit family. In terms of assembly, NDH-1 is composed of 14 different subunits. Subunits NuoB, C, D, E, F, and G constitute the peripheral sector of the complex.

It is found in the cell inner membrane. It catalyses the reaction a quinone + NADH + 5 H(+)(in) = a quinol + NAD(+) + 4 H(+)(out). In terms of biological role, NDH-1 shuttles electrons from NADH, via FMN and iron-sulfur (Fe-S) centers, to quinones in the respiratory chain. The immediate electron acceptor for the enzyme in this species is believed to be ubiquinone. Couples the redox reaction to proton translocation (for every two electrons transferred, four hydrogen ions are translocated across the cytoplasmic membrane), and thus conserves the redox energy in a proton gradient. This Cupriavidus taiwanensis (strain DSM 17343 / BCRC 17206 / CCUG 44338 / CIP 107171 / LMG 19424 / R1) (Ralstonia taiwanensis (strain LMG 19424)) protein is NADH-quinone oxidoreductase subunit D.